Here is a 206-residue protein sequence, read N- to C-terminus: Probable thymidylate kinase (206 aa).

7–14 provides a ligand contact to ATP; that stretch reads GIDGSGKS.

It belongs to the thymidylate kinase family.

The catalysed reaction is dTMP + ATP = dTDP + ADP. The sequence is that of Probable thymidylate kinase from Methanospirillum hungatei JF-1 (strain ATCC 27890 / DSM 864 / NBRC 100397 / JF-1).